We begin with the raw amino-acid sequence, 296 residues long: Bifunctional protein FolD (296 aa).

Residues Gly166–Ser168, Ser191, and Ile232 each bind NADP(+).

Belongs to the tetrahydrofolate dehydrogenase/cyclohydrolase family. As to quaternary structure, homodimer.

The enzyme catalyses (6R)-5,10-methylene-5,6,7,8-tetrahydrofolate + NADP(+) = (6R)-5,10-methenyltetrahydrofolate + NADPH. It catalyses the reaction (6R)-5,10-methenyltetrahydrofolate + H2O = (6R)-10-formyltetrahydrofolate + H(+). The protein operates within one-carbon metabolism; tetrahydrofolate interconversion. Its function is as follows. Catalyzes the oxidation of 5,10-methylenetetrahydrofolate to 5,10-methenyltetrahydrofolate and then the hydrolysis of 5,10-methenyltetrahydrofolate to 10-formyltetrahydrofolate. This chain is Bifunctional protein FolD, found in Cereibacter sphaeroides (strain ATCC 17029 / ATH 2.4.9) (Rhodobacter sphaeroides).